A 207-amino-acid polypeptide reads, in one-letter code: dTTP/UTP pyrophosphatase (207 aa).

Asp79 (proton acceptor) is an active-site residue.

This sequence belongs to the Maf family. YhdE subfamily. A divalent metal cation serves as cofactor.

The protein resides in the cytoplasm. It carries out the reaction dTTP + H2O = dTMP + diphosphate + H(+). The enzyme catalyses UTP + H2O = UMP + diphosphate + H(+). In terms of biological role, nucleoside triphosphate pyrophosphatase that hydrolyzes dTTP and UTP. May have a dual role in cell division arrest and in preventing the incorporation of modified nucleotides into cellular nucleic acids. The chain is dTTP/UTP pyrophosphatase from Rhodopseudomonas palustris (strain BisB18).